We begin with the raw amino-acid sequence, 179 residues long: Large ribosomal subunit protein uL5 (179 aa).

This sequence belongs to the universal ribosomal protein uL5 family. In terms of assembly, part of the 50S ribosomal subunit; part of the 5S rRNA/L5/L18/L25 subcomplex. Contacts the 5S rRNA and the P site tRNA. Forms a bridge to the 30S subunit in the 70S ribosome.

Functionally, this is one of the proteins that bind and probably mediate the attachment of the 5S RNA into the large ribosomal subunit, where it forms part of the central protuberance. In the 70S ribosome it contacts protein S13 of the 30S subunit (bridge B1b), connecting the 2 subunits; this bridge is implicated in subunit movement. Contacts the P site tRNA; the 5S rRNA and some of its associated proteins might help stabilize positioning of ribosome-bound tRNAs. This Shewanella frigidimarina (strain NCIMB 400) protein is Large ribosomal subunit protein uL5.